The chain runs to 490 residues: GTPase Der (490 aa).

2 EngA-type G domains span residues Pro-3 to Leu-166 and Ile-203 to Thr-376. Residues Gly-9–Ser-16, Asp-56–Ile-60, Asn-118–Asp-121, Gly-209–Ser-216, Asp-256–Val-260, and Asn-321–Asp-324 each bind GTP. The 85-residue stretch at Arg-377–Glu-461 folds into the KH-like domain.

This sequence belongs to the TRAFAC class TrmE-Era-EngA-EngB-Septin-like GTPase superfamily. EngA (Der) GTPase family. In terms of assembly, associates with the 50S ribosomal subunit.

GTPase that plays an essential role in the late steps of ribosome biogenesis. This chain is GTPase Der, found in Escherichia fergusonii (strain ATCC 35469 / DSM 13698 / CCUG 18766 / IAM 14443 / JCM 21226 / LMG 7866 / NBRC 102419 / NCTC 12128 / CDC 0568-73).